The following is a 548-amino-acid chain: ComP-specific O-oligosaccharyltransferase (548 aa).

12 consecutive transmembrane segments (helical) span residues 8–28 (IKNYTIVSGVFFLGSAFIIPN), 32–52 (LSSTLYKELIAVLGLLILLTV), 68–88 (WFLFVIFIIFIQLIVGEIYFF), 91–111 (FFFSISFLVILFLSFLLGFNE), 119–139 (IVKKIAWIFIIVVQISFLIAI), 164–184 (LGQPNQFSTLILITLFLLCYL), 189–209 (SLNNMVFNILSFCLIFANVMT), 213–233 (SAWISVILISLLYLLKFQKKI), 239–259 (IFFNIVFWTLVYCVPLLFNLI), 331–351 (MLWNGFFIGLIISILILCFLI), 363–383 (LFLFFCVVAFFVHCLLEYPFA), and 418–438 (TLFLGCCWLGYVAFWVEVLDI).

Belongs to the PglL O-oligosaccharyltransferase family.

It localises to the cell membrane. Its function is as follows. Specifically catalyzes the glycosylation of the pilin-like competence factor ComP. The sequence is that of ComP-specific O-oligosaccharyltransferase from Acinetobacter baylyi (strain ATCC 33305 / BD413 / ADP1).